We begin with the raw amino-acid sequence, 313 residues long: Protoheme IX farnesyltransferase (313 aa).

The next 9 membrane-spanning stretches (helical) occupy residues 29–49 (VISL…RGWP), 57–77 (LWLL…AGVF), 101–123 (LISS…VMLW), 124–144 (VWGT…YVVI), 157–177 (IVIG…AVTG), 185–205 (YLFA…ALMI), 225–245 (MTVA…LMPV), 247–267 (FGAV…WLLW), and 287–307 (AVPL…AGAI).

The protein belongs to the UbiA prenyltransferase family. Protoheme IX farnesyltransferase subfamily.

It localises to the cell membrane. It carries out the reaction heme b + (2E,6E)-farnesyl diphosphate + H2O = Fe(II)-heme o + diphosphate. It participates in porphyrin-containing compound metabolism; heme O biosynthesis; heme O from protoheme: step 1/1. Its function is as follows. Converts heme B (protoheme IX) to heme O by substitution of the vinyl group on carbon 2 of heme B porphyrin ring with a hydroxyethyl farnesyl side group. The sequence is that of Protoheme IX farnesyltransferase from Deinococcus radiodurans (strain ATCC 13939 / DSM 20539 / JCM 16871 / CCUG 27074 / LMG 4051 / NBRC 15346 / NCIMB 9279 / VKM B-1422 / R1).